Here is a 469-residue protein sequence, read N- to C-terminus: Coumaroyl-CoA:anthocyanidin 3-O-glucoside-6''-O-coumaroyltransferase 1 (469 aa).

M1 carries the N-acetylmethionine modification. Active-site proton acceptor residues include H173 and D410.

The protein belongs to the plant acyltransferase family. Highly expressed in flowers, leaves and roots. Lower levels of expression in stems and siliques.

In terms of biological role, involved in the acylation of the 6'' position of the 3-O-glucose residue of anthocyanin. Also able to use flavonol 3-glucosides as the acyl acceptor. The polypeptide is Coumaroyl-CoA:anthocyanidin 3-O-glucoside-6''-O-coumaroyltransferase 1 (3AT1) (Arabidopsis thaliana (Mouse-ear cress)).